The following is a 115-amino-acid chain: Galanin-like peptide (115 aa).

Residues 1–23 (MAPSVPLVLLLVLLLSLAETPAS) form the signal peptide. Residues 86-115 (NVMEAFAKPEIGDLDVLSKKIPKEEDVLKS) constitute a propeptide that is removed on maturation.

This sequence belongs to the galanin family. Hypothalamus and pituitary gland.

It localises to the secreted. Functionally, hypothalamic neuropeptide which binds to the G-protein-coupled galanin receptors (GALR1, GALR2 and GALR3). Involved in a large number of putative physiological functions in CNS homeostatic processes, including the regulation of gonadotropin-releasing hormone secretion. Its function is as follows. Exhibits potent and dose-dependent vasoconstrictor and anti-edema activity in the cutaneous microvasculature, a physiologic effects which does not appear to be mediated via GALR1 or GALR2. Exhibits antimicrobial activity against Gram-negative bacterias, inducing bacterial membrane blebbing. This chain is Galanin-like peptide (GALP), found in Macaca nemestrina (Pig-tailed macaque).